Consider the following 149-residue polypeptide: Sperm surface protein Sp17 (149 aa).

Residues Cys83–Thr96 are compositionally biased toward basic and acidic residues. Positions Cys83–Ala114 are disordered. Positions Glu103–Glu113 are enriched in acidic residues. The IQ domain maps to Glu112–Glu141.

Homodimer. May interact with ROPN1. In terms of tissue distribution, testis- and sperm-specific.

The protein resides in the membrane. In terms of biological role, sperm surface zona pellucida binding protein. Helps to bind spermatozoa to the zona pellucida with high affinity. Might function in binding zona pellucida and carbohydrates. The polypeptide is Sperm surface protein Sp17 (Spa17) (Mus musculus (Mouse)).